The following is a 1349-amino-acid chain: MPHSRQPSISSSIMSQSNHNHPQKIGPWKLGKTLGRGATGRVLLATHQTTGQKAAVKVVSKSELQDEETEKNGDGLPYGIEREIIIMKLLTHPNVLRLYDVWETSKALYLVLEYVEGGELFDLLVERGPLPEVEAIKYFRQIILGTAYCHALGICHRDLKPENLLLDSQLNVKLADFGMAALESNGKLLETSCGSPHYAAPEIVSGLKYHGAASDVWSCGVILFALLTGRLPFDDENIRNLLLKVQAGNFEMPVDEVSREARDLIARMLEVDPMRRISTEKILRHPLLTKYPMSNEDLISEKSLPHPQTGYKSLGSVRNIDKQILSNLTILWNDRPEEEIVDCLLKDGSNPEKTFYALLMRYKHNQEDNTNNNSPKKSTSFNNKVVRSGSKYSLNGTPRRKRASHISVSRPTSFQYKSNPGAGATANRNSVARHSVASSANNSPRKSPYKSPYRSPYRSPYKSPSKRYSYNQSPTKSPYGRRSNSQRQFENEPLKAKPRNIYNEIVDAQSNFSLPPSLPPSLPSKDSRYMIDEPNQPQLQQPALSQVPENPIVDESPDLMQSAKISSGKRNSIIGKNNNNSNSNKRMSKRKSIRASMTTGLKRNSITMKLLSTYAKLSGDDDWEYMDKQTKRTSATFAALCDKIFNQEDYDEEDEQLVDPEEKEAKEYERLMELERKKHEAELKARRELEKKKRRQKRRSILSSKKLSIIVKNDADPNNSEQELVDEGIKQPKRQSKNLTALRALSEGNHASEELTLEDVENLKRRSASQPVPKRRQTPVLTRRPVSRLDPLWQAHENEQLDRAKDALEQEWRDSQKRSSTVSRKKVNRESMISVMDDIVEEDQGRVNRRSTRNTYYERERDYELPEPTVEDSNLTDDYMTEIRKSRLLNSQLNVRDPLNEKRKSEPKTLISNVQIPSVTRKSRNFTTSNKRLSVLSMYSTKESYRDLNSIINSPDENPEQHQNMNKPALRTSIADRLDKAGLAEPEYETETDGEDKVSVIDLDDHLADRRTSYYDGSGKRASRASTTKRYNVHSSSGQRPKSKVPDLPKNDYDDTFVSNSDEVHKRQYKSMVSDESSASDDVFDKIKLPDGKSTKSSIDELANGTSTSGHRKPKIRHSQPGPEMLIPHLNGGIESSQPMSKVRGNNSSGHDDSVPPPPPAHKVNKKPLDDKTNFPPPEVDPKRKGSFFRKLSWGSKKTIENNTNAATNTTTQQQLPSPAESKEEKPKSSFFRWFSSSNTPSAAEIRKFNTILPKHEMSTALFALLNSWSNFGLKDLRNDQVGYYITGAISKHNSFNLKSCKFRIKINQRDFNQKSEIVCVRVKGSKVTTDTLFSEIEKVLLKEGVLDK.

The segment covering 1–20 has biased composition (low complexity); sequence MPHSRQPSISSSIMSQSNHN. The interval 1-30 is disordered; the sequence is MPHSRQPSISSSIMSQSNHNHPQKIGPWKL. 4 positions are modified to phosphoserine: Ser10, Ser11, Ser12, and Ser15. The Protein kinase domain occupies 28–288; that stretch reads WKLGKTLGRG…TEKILRHPLL (261 aa). Residues 34-42 and Lys57 contribute to the ATP site; that span reads LGRGATGRV. Thr69 carries the post-translational modification Phosphothreonine. Catalysis depends on Asp158, which acts as the Proton acceptor. Residue Thr191 is modified to Phosphothreonine. 3 positions are modified to phosphoserine: Ser294, Ser300, and Ser303. Disordered regions lie at residues 366–498 and 510–532; these read QEDN…KAKP and SNFS…YMID. Residues 369–384 show a composition bias toward low complexity; sequence NTNNNSPKKSTSFNNK. Phosphoserine occurs at positions 388, 390, and 393. Phosphothreonine is present on Thr397. Composition is skewed to polar residues over residues 406–418 and 426–442; these read ISVS…QYKS and ANRN…SANN. A phosphoserine mark is found at Ser407 and Ser409. Position 412 is a phosphothreonine (Thr412). Ser413 carries the post-translational modification Phosphoserine. Residues 443–470 show a composition bias toward low complexity; that stretch reads SPRKSPYKSPYRSPYRSPYKSPSKRYSY. Phosphoserine occurs at positions 455, 469, 473, 477, and 485. Positions 471–488 are enriched in polar residues; it reads NQSPTKSPYGRRSNSQRQ. Phosphoserine is present on Ser556. Residues 570 to 585 are compositionally biased toward low complexity; that stretch reads RNSIIGKNNNNSNSNK. Residues 570 to 593 are disordered; it reads RNSIIGKNNNNSNSNKRMSKRKSI. Position 634 is a phosphoserine (Ser634). Residues 661–701 adopt a coiled-coil conformation; the sequence is EEKEAKEYERLMELERKKHEAELKARRELEKKKRRQKRRSI. Positions 712-737 are disordered; sequence KNDADPNNSEQELVDEGIKQPKRQSK. Residues Ser720 and Ser746 each carry the phosphoserine modification. The segment at 756 to 798 is disordered; it reads TLEDVENLKRRSASQPVPKRRQTPVLTRRPVSRLDPLWQAHEN. Phosphothreonine occurs at positions 778, 869, and 876. Ser891 carries the post-translational modification Phosphoserine. Thr941 carries the phosphothreonine modification. At Ser973 the chain carries Phosphoserine. Thr990 and Thr992 each carry phosphothreonine. Ser999 carries the post-translational modification Phosphoserine. The interval 1011–1229 is disordered; the sequence is RTSYYDGSGK…AESKEEKPKS (219 aa). A compositionally biased stretch (polar residues) spans 1024–1040; the sequence is RASTTKRYNVHSSSGQR. Basic and acidic residues predominate over residues 1044-1053; it reads KVPDLPKNDY. Position 1056 is a phosphothreonine (Thr1056). Residues Ser1059, Ser1074, Ser1077, Ser1078, Ser1080, and Ser1094 each carry the phosphoserine modification. Over residues 1083–1094 the composition is skewed to basic and acidic residues; that stretch reads VFDKIKLPDGKS. Thr1095 carries the post-translational modification Phosphothreonine. A phosphoserine mark is found at Ser1097 and Ser1098. Thr1106 is subject to Phosphothreonine. A compositionally biased stretch (polar residues) spans 1134–1149; it reads IESSQPMSKVRGNNSS. Position 1154 is a phosphoserine (Ser1154). Residues 1202-1215 show a composition bias toward low complexity; the sequence is NNTNAATNTTTQQQ. Position 1218 is a phosphoserine (Ser1218).

Belongs to the protein kinase superfamily. CAMK Ser/Thr protein kinase family. NIM1 subfamily. Associates with the septin complex which consists of CDC3, CDC10, CDC11, CDC12, and SEP7. Post-translationally, hyperphosphorylated during mitosis at dozens of sites. Among these, 7 have perfect or minimal CDK consensus sites and are CDC28 targets.

It localises to the cytoplasm. The protein resides in the bud neck. It catalyses the reaction L-seryl-[protein] + ATP = O-phospho-L-seryl-[protein] + ADP + H(+). It carries out the reaction L-threonyl-[protein] + ATP = O-phospho-L-threonyl-[protein] + ADP + H(+). Its function is as follows. Serine/threonine-protein kinase which regulates the localization and the function of the septins during mitosis. Involved in the formation of the septin ring but not the basal septin band. Phosphorylates septins CDC11 and SEP7. Required for the transition from pseudohyphae to hyphae. Acts upstream of IRS4 and INP51 in regulating cell wall integrity responses. Involved in propolis-induced cell death. The sequence is that of Serine/threonine-protein kinase GIN4 (GIN4) from Candida albicans (strain SC5314 / ATCC MYA-2876) (Yeast).